Reading from the N-terminus, the 395-residue chain is Elongation factor Tu (395 aa).

Positions 10-204 (KPHVNIGTIG…AVDSYIPTPE (195 aa)) constitute a tr-type G domain. Positions 19-26 (GHVDHGKT) are G1. 19 to 26 (GHVDHGKT) contributes to the GTP binding site. A Mg(2+)-binding site is contributed by threonine 26. The segment at 60–64 (GITIS) is G2. The interval 81–84 (DCPG) is G3. GTP contacts are provided by residues 81–85 (DCPGH) and 136–139 (NKCD). The G4 stretch occupies residues 136-139 (NKCD). The tract at residues 174 to 176 (SAL) is G5.

Belongs to the TRAFAC class translation factor GTPase superfamily. Classic translation factor GTPase family. EF-Tu/EF-1A subfamily. Monomer.

It localises to the cytoplasm. It carries out the reaction GTP + H2O = GDP + phosphate + H(+). Functionally, GTP hydrolase that promotes the GTP-dependent binding of aminoacyl-tRNA to the A-site of ribosomes during protein biosynthesis. This Listeria monocytogenes serotype 4b (strain CLIP80459) protein is Elongation factor Tu.